The following is a 31-amino-acid chain: Cytochrome b6-f complex subunit 6 (31 aa).

The chain crosses the membrane as a helical span at residues 4 to 26 (ITSYFGFLLAASTITSALLIGLS).

This sequence belongs to the PetL family. The 4 large subunits of the cytochrome b6-f complex are cytochrome b6, subunit IV (17 kDa polypeptide, PetD), cytochrome f and the Rieske protein, while the 4 small subunits are PetG, PetL, PetM and PetN. The complex functions as a dimer.

The protein localises to the plastid. It localises to the chloroplast thylakoid membrane. Its function is as follows. Component of the cytochrome b6-f complex, which mediates electron transfer between photosystem II (PSII) and photosystem I (PSI), cyclic electron flow around PSI, and state transitions. PetL is important for photoautotrophic growth as well as for electron transfer efficiency and stability of the cytochrome b6-f complex. This Chloranthus spicatus (Chulantree) protein is Cytochrome b6-f complex subunit 6.